Consider the following 171-residue polypeptide: Disulfide bond formation protein B (171 aa).

Residues 1–10 (MQRLLTYRAL) lie on the Cytoplasmic side of the membrane. The helical transmembrane segment at 11–27 (NFILFIASVVAMLFAII) threads the bilayer. Over 28-46 (FLQNYKGLEPCPLCIFQRI) the chain is Periplasmic. Cys38 and Cys41 are disulfide-bonded. A helical membrane pass occupies residues 47–63 (GLMVMGGFSLIAAVGHP). Residues 64–70 (KKMGMQL) lie on the Cytoplasmic side of the membrane. A helical transmembrane segment spans residues 71-88 (LLWIGSMAGILWSAGVAA). The Periplasmic segment spans residues 89–145 (RHVWIQHLPADQVPACGPGLDYFLEALPMKQVINQVLSGSGECAEISWRFLGLSIPE). A disulfide bridge connects residues Cys104 and Cys131. Residues 146–164 (QALILFTALILVNLLVLWR) traverse the membrane as a helical segment. Residues 165-171 (IISKRTA) lie on the Cytoplasmic side of the membrane.

It belongs to the DsbB family.

The protein localises to the cell inner membrane. Required for disulfide bond formation in some periplasmic proteins. Acts by oxidizing the DsbA protein. The polypeptide is Disulfide bond formation protein B (Psychrobacter sp. (strain PRwf-1)).